The sequence spans 888 residues: Kinesin-like protein KIF20A (888 aa).

Serine 2 is subject to N-acetylserine. Phosphoserine occurs at positions 7, 14, and 21. Residues lysine 63–leucine 506 form the Kinesin motor domain. Residue glycine 159–threonine 166 participates in ATP binding. Serine 527 is subject to Phosphoserine; by PLK1. The residue at position 531 (serine 531) is a Phosphoserine. Coiled coils occupy residues lysine 559–leucine 587 and glutamate 630–cysteine 760. Serine 667, serine 683, and serine 823 each carry phosphoserine. A globular region spans residues cysteine 761–tyrosine 888. The interval serine 823–aspartate 863 is disordered. Threonine 855 is subject to Phosphothreonine. A phosphoserine mark is found at serine 865, serine 876, and serine 881.

It belongs to the TRAFAC class myosin-kinesin ATPase superfamily. Kinesin family. Post-translationally, phosphorylated by PLK1 at Ser-527 during mitosis, creating a docking site for PLK1 and recruiting PLK1 at central spindle.

The protein localises to the golgi apparatus. The protein resides in the cytoplasm. Its subcellular location is the cytoskeleton. It localises to the spindle. Its function is as follows. Mitotic kinesin required for chromosome passenger complex (CPC)-mediated cytokinesis. Following phosphorylation by PLK1, involved in recruitment of PLK1 to the central spindle. Interacts with guanosine triphosphate (GTP)-bound forms of RAB6A and RAB6B. May act as a motor required for the retrograde RAB6 regulated transport of Golgi membranes and associated vesicles along microtubules. Has a microtubule plus end-directed motility. The protein is Kinesin-like protein KIF20A (KIF20A) of Bos taurus (Bovine).